The primary structure comprises 380 residues: Probable dual-specificity RNA methyltransferase RlmN (380 aa).

Catalysis depends on glutamate 123, which acts as the Proton acceptor. The 234-residue stretch at 129-362 folds into the Radical SAM core domain; sequence HEYGNSVCVT…VTIRREQGSD (234 aa). Cysteine 136 and cysteine 367 form a disulfide bridge. The [4Fe-4S] cluster site is built by cysteine 143, cysteine 147, and cysteine 150. Residues 193-194, serine 225, 248-250, and asparagine 324 each bind S-adenosyl-L-methionine; these read GE and SLH. Cysteine 367 acts as the S-methylcysteine intermediate in catalysis.

It belongs to the radical SAM superfamily. RlmN family. [4Fe-4S] cluster is required as a cofactor.

The protein localises to the cytoplasm. The enzyme catalyses adenosine(2503) in 23S rRNA + 2 reduced [2Fe-2S]-[ferredoxin] + 2 S-adenosyl-L-methionine = 2-methyladenosine(2503) in 23S rRNA + 5'-deoxyadenosine + L-methionine + 2 oxidized [2Fe-2S]-[ferredoxin] + S-adenosyl-L-homocysteine. It carries out the reaction adenosine(37) in tRNA + 2 reduced [2Fe-2S]-[ferredoxin] + 2 S-adenosyl-L-methionine = 2-methyladenosine(37) in tRNA + 5'-deoxyadenosine + L-methionine + 2 oxidized [2Fe-2S]-[ferredoxin] + S-adenosyl-L-homocysteine. In terms of biological role, specifically methylates position 2 of adenine 2503 in 23S rRNA and position 2 of adenine 37 in tRNAs. The protein is Probable dual-specificity RNA methyltransferase RlmN of Lysinibacillus sphaericus (strain C3-41).